Here is a 462-residue protein sequence, read N- to C-terminus: Argininosuccinate lyase (462 aa).

This sequence belongs to the lyase 1 family. Argininosuccinate lyase subfamily.

Its subcellular location is the cytoplasm. It carries out the reaction 2-(N(omega)-L-arginino)succinate = fumarate + L-arginine. It functions in the pathway amino-acid biosynthesis; L-arginine biosynthesis; L-arginine from L-ornithine and carbamoyl phosphate: step 3/3. The sequence is that of Argininosuccinate lyase from Prochlorococcus marinus (strain MIT 9211).